We begin with the raw amino-acid sequence, 479 residues long: Poly(A) polymerase catalytic subunit (479 aa).

Active-site residues include D202 and D204. Residues D202, D204, and D253 each coordinate Ca(2+).

This sequence belongs to the poxviridae poly(A) polymerase catalytic subunit family. In terms of assembly, heterodimer of a large (catalytic) subunit and a small (regulatory) subunit.

The catalysed reaction is RNA(n) + ATP = RNA(n)-3'-adenine ribonucleotide + diphosphate. Its function is as follows. Polymerase that creates the 3'-poly(A) tail of mRNA's. The polypeptide is Poly(A) polymerase catalytic subunit (OPG063) (Mus musculus (Mouse)).